Reading from the N-terminus, the 544-residue chain is uncharacterized protein (544 aa).

An N-terminal signal peptide occupies residues 1–34 (MIARRMLCARPWGPSCVVCALCGALAALVPAVGA). Residues 38–69 (AVPAPGTPAPPAHTASEAVPPAPEPRAEGEQP) form a disordered region.

This sequence belongs to the TP096X family.

This is an uncharacterized protein from Treponema pallidum (strain Nichols).